Here is a 172-residue protein sequence, read N- to C-terminus: Small ribosomal subunit protein uS5 (172 aa).

The region spanning 11–74 is the S5 DRBM domain; that stretch reads LFESVVDIAR…RKAKGAMIRF (64 aa).

The protein belongs to the universal ribosomal protein uS5 family. Part of the 30S ribosomal subunit. Contacts proteins S4 and S8.

In terms of biological role, with S4 and S12 plays an important role in translational accuracy. Functionally, located at the back of the 30S subunit body where it stabilizes the conformation of the head with respect to the body. The sequence is that of Small ribosomal subunit protein uS5 from Neorickettsia sennetsu (strain ATCC VR-367 / Miyayama) (Ehrlichia sennetsu).